The chain runs to 420 residues: MSLLALGINHKTAPVSLRERVTFSPDTLDRAIESLLRQPSVQAGVVLSTCNRTELYLSVEQRADLRQQIVDWLCSYHQLTPEEVSDSLYWHQDNEAVSHLMRVASGLDSLVLGEPQILGQVKKAFSESQREQALSADLERLFQKTFSVAKRVRTETEIGTSAVSVAFAACTLARQIFESLARLNVLLVGAGETIELVARHLHQHQVQHMMIANRTRERAQSLADEVGAEVIPLADIDARLADADIVISSTASPLPIIGKGMVERALKARRNRPMLLVDIAVPRDIEPEVGDLANAYLYSVDDLHAIIQGNMAQRQEAAVQAEHIVQQECANFMAWLRAQGAVDTIREYRAQAEQRRAEAESEALAALAQGVEAEAVIRRLAHRLTNRLIHAPTKSLQQAAGSGDAQRLQMLRDSLGLDHN.

Substrate contacts are provided by residues 49-52, Ser109, 114-116, and Gln120; these read TCNR and EPQ. Cys50 serves as the catalytic Nucleophile. Residue 189-194 coordinates NADP(+); it reads GAGETI.

This sequence belongs to the glutamyl-tRNA reductase family. Homodimer.

It catalyses the reaction (S)-4-amino-5-oxopentanoate + tRNA(Glu) + NADP(+) = L-glutamyl-tRNA(Glu) + NADPH + H(+). The protein operates within porphyrin-containing compound metabolism; protoporphyrin-IX biosynthesis; 5-aminolevulinate from L-glutamyl-tRNA(Glu): step 1/2. In terms of biological role, catalyzes the NADPH-dependent reduction of glutamyl-tRNA(Glu) to glutamate 1-semialdehyde (GSA). The protein is Glutamyl-tRNA reductase of Edwardsiella ictaluri (strain 93-146).